Reading from the N-terminus, the 342-residue chain is Nucleoid-associated protein Sbal223_1817 (342 aa).

It belongs to the YejK family.

It is found in the cytoplasm. The protein resides in the nucleoid. In Shewanella baltica (strain OS223), this protein is Nucleoid-associated protein Sbal223_1817.